Consider the following 459-residue polypeptide: UDP-N-acetylmuramoylalanine--D-glutamate ligase (459 aa).

ATP is bound at residue 119–125 (GTNGKTT).

The protein belongs to the MurCDEF family.

The protein localises to the cytoplasm. It catalyses the reaction UDP-N-acetyl-alpha-D-muramoyl-L-alanine + D-glutamate + ATP = UDP-N-acetyl-alpha-D-muramoyl-L-alanyl-D-glutamate + ADP + phosphate + H(+). It functions in the pathway cell wall biogenesis; peptidoglycan biosynthesis. Its function is as follows. Cell wall formation. Catalyzes the addition of glutamate to the nucleotide precursor UDP-N-acetylmuramoyl-L-alanine (UMA). The polypeptide is UDP-N-acetylmuramoylalanine--D-glutamate ligase (Lacticaseibacillus casei (strain BL23) (Lactobacillus casei)).